We begin with the raw amino-acid sequence, 325 residues long: GMP reductase (325 aa).

The Thioimidate intermediate role is filled by C173. Residue 202 to 225 (IIADGGIRSHGDIAKSVRFGATMV) participates in NADP(+) binding.

Belongs to the IMPDH/GMPR family. GuaC type 2 subfamily.

It catalyses the reaction IMP + NH4(+) + NADP(+) = GMP + NADPH + 2 H(+). In terms of biological role, catalyzes the irreversible NADPH-dependent deamination of GMP to IMP. It functions in the conversion of nucleobase, nucleoside and nucleotide derivatives of G to A nucleotides, and in maintaining the intracellular balance of A and G nucleotides. This Acidovorax ebreus (strain TPSY) (Diaphorobacter sp. (strain TPSY)) protein is GMP reductase.